The following is a 405-amino-acid chain: Diaminopimelate decarboxylase (405 aa).

The residue at position 46 (K46) is an N6-(pyridoxal phosphate)lysine. Pyridoxal 5'-phosphate-binding positions include G225 and 259 to 262 (EPGR). Residues R262, R298, and Y302 each coordinate substrate. The Proton donor role is filled by C329. Substrate-binding residues include E330 and Y358. A pyridoxal 5'-phosphate-binding site is contributed by Y358.

The protein belongs to the Orn/Lys/Arg decarboxylase class-II family. LysA subfamily. As to quaternary structure, homodimer. The cofactor is pyridoxal 5'-phosphate.

The enzyme catalyses meso-2,6-diaminopimelate + H(+) = L-lysine + CO2. The protein operates within amino-acid biosynthesis; L-lysine biosynthesis via DAP pathway; L-lysine from DL-2,6-diaminopimelate: step 1/1. Its function is as follows. Specifically catalyzes the decarboxylation of meso-diaminopimelate (meso-DAP) to L-lysine. This chain is Diaminopimelate decarboxylase, found in Helicobacter pylori (strain ATCC 700392 / 26695) (Campylobacter pylori).